The chain runs to 33 residues: Pardaxin P-1 (33 aa).

The protein belongs to the pardaxin family. In terms of assembly, in aqueous solution exists as a tetramer.

Its subcellular location is the secreted. The protein resides in the target cell membrane. Its function is as follows. Exhibits unusual shark repellent and surfactant properties. Forms voltage-dependent, ion-permeable channels in membranes. At high concentration causes cell membrane lysis. Causes death in killfish oryzias latipes in 30 minutes at a concentration of 25 micrograms/ml. This chain is Pardaxin P-1, found in Pardachirus pavoninus (Peacock sole).